The sequence spans 426 residues: O-methyltransferase pyvH (426 aa).

S-adenosyl-L-methionine is bound by residues 258–259 (GG), Asp-281, 308–309 (DF), and Arg-323. His-327 (proton acceptor) is an active-site residue.

Belongs to the class I-like SAM-binding methyltransferase superfamily. Cation-independent O-methyltransferase family.

The protein operates within secondary metabolite biosynthesis. In terms of biological role, O-methyltransferase; part of the gene cluster that mediates the biosynthesis of pyranoviolin A, a pyranonigrin analog with a C-3 methoxy group. Initially, the PKS portion of pyvA synthesizes C-10 carbon chain from 5 molecules of malonyl-CoA, which is then condensed with the thiolation (T) domain-bound glycine activated by the adenylation (A) domain. The subsequent chain release by Dieckmann condensation (DKC) could be catalyzed by the TE domain present at the C-terminus of pyvA and/or the alpha/beta hydrolase pyvD, installing the tetramic acid moiety. The FAD-dependent monooxygenase pyvC next epoxidizes one of the olefins of the polyketide part, and the epoxide ring-opening induces the dihydro-gamma-pyrone ring formation. The cytochrome P450 monooxygeanse pyvB would be responsible for the 2 consecutive reactions, in which the dihydro-gamma-pyrone is oxidized to gamma-pyrone and C-7 is hydroxylated to yield pyranonigrin F. Finally, the O-methyltransferase pyvH methylates the C-3 hydroxy group to complete the biosynthesis. The polypeptide is O-methyltransferase pyvH (Aspergillus violaceofuscus (strain CBS 115571)).